Here is a 376-residue protein sequence, read N- to C-terminus: Heme chaperone HemW (376 aa).

The 236-residue stretch at M1–E236 folds into the Radical SAM core domain. Y10 is a binding site for S-adenosyl-L-methionine. The [4Fe-4S] cluster site is built by C16, C20, and C23. S-adenosyl-L-methionine is bound by residues G66, G67–T68, E99, Q126, R138, and D162.

It belongs to the anaerobic coproporphyrinogen-III oxidase family. HemW subfamily. [4Fe-4S] cluster is required as a cofactor.

The protein localises to the cytoplasm. Probably acts as a heme chaperone, transferring heme to an unknown acceptor. Binds one molecule of heme per monomer, possibly covalently. Binds 1 [4Fe-4S] cluster. The cluster is coordinated with 3 cysteines and an exchangeable S-adenosyl-L-methionine. The protein is Heme chaperone HemW of Buchnera aphidicola subsp. Schizaphis graminum (strain Sg).